Consider the following 621-residue polypeptide: Nitrate reductase [NADH] 1 (621 aa).

The Cytochrome b5 heme-binding domain maps to 249-324 (GKEFTMSEVR…LDTYRIGELI (76 aa)). Positions 284 and 307 each coordinate heme. Residues 361 to 473 (REKIHCRLVG…KGPLGHVEYT (113 aa)) form the FAD-binding FR-type domain. FAD-binding positions include 413–416 (RAYT), 430–432 (LVK), F435, 447–449 (LMT), S497, and T500.

Belongs to the nitrate reductase family. Homodimer. The cofactor is FAD. Requires heme as cofactor. It depends on Mo-molybdopterin as a cofactor.

It catalyses the reaction nitrite + NAD(+) + H2O = nitrate + NADH + H(+). Functionally, nitrate reductase is a key enzyme involved in the first step of nitrate assimilation in plants, fungi and bacteria. This Zea mays (Maize) protein is Nitrate reductase [NADH] 1.